A 156-amino-acid chain; its full sequence is Small ribosomal subunit protein uS7 (156 aa).

This sequence belongs to the universal ribosomal protein uS7 family. As to quaternary structure, part of the 30S ribosomal subunit. Contacts proteins S9 and S11.

One of the primary rRNA binding proteins, it binds directly to 16S rRNA where it nucleates assembly of the head domain of the 30S subunit. Is located at the subunit interface close to the decoding center, probably blocks exit of the E-site tRNA. The polypeptide is Small ribosomal subunit protein uS7 (Proteus mirabilis (strain HI4320)).